A 519-amino-acid chain; its full sequence is Golgi-associated kinase 1B (519 aa).

At M1–N37 the chain is on the cytoplasmic side. A helical; Signal-anchor for type II membrane protein transmembrane segment spans residues L38–V55. At G56–E519 the chain is on the extracellular side. Residues H62–Q103 are disordered. The span at K68–A77 shows a compositional bias: basic and acidic residues. N289 carries N-linked (GlcNAc...) asparagine glycosylation.

It belongs to the GASK family.

It localises to the golgi apparatus membrane. The polypeptide is Golgi-associated kinase 1B (Homo sapiens (Human)).